Consider the following 459-residue polypeptide: Bifunctional protein GlmU (459 aa).

The pyrophosphorylase stretch occupies residues 1–230; that stretch reads MVKRYAVILA…FDETIGINDR (230 aa). Residues 9-12, Lys23, Gln73, and 78-79 each bind UDP-N-acetyl-alpha-D-glucosamine; these read LAAG and GT. Asp103 lines the Mg(2+) pocket. UDP-N-acetyl-alpha-D-glucosamine-binding residues include Gly140, Glu155, Asn170, and Asn228. Asn228 is a binding site for Mg(2+). The tract at residues 231–251 is linker; that stretch reads IALAEAERIMRDRICRQHMKN. The interval 252-459 is N-acetyltransferase; that stretch reads GVTIIDPACT…VDRLRGKKKS (208 aa). The UDP-N-acetyl-alpha-D-glucosamine site is built by Arg333 and Lys351. His363 serves as the catalytic Proton acceptor. UDP-N-acetyl-alpha-D-glucosamine contacts are provided by Tyr366 and Asn377. Residues 386–387, Ala423, and Arg440 each bind acetyl-CoA; that span reads NY.

This sequence in the N-terminal section; belongs to the N-acetylglucosamine-1-phosphate uridyltransferase family. In the C-terminal section; belongs to the transferase hexapeptide repeat family. In terms of assembly, homotrimer. The cofactor is Mg(2+).

Its subcellular location is the cytoplasm. The enzyme catalyses alpha-D-glucosamine 1-phosphate + acetyl-CoA = N-acetyl-alpha-D-glucosamine 1-phosphate + CoA + H(+). The catalysed reaction is N-acetyl-alpha-D-glucosamine 1-phosphate + UTP + H(+) = UDP-N-acetyl-alpha-D-glucosamine + diphosphate. Its pathway is nucleotide-sugar biosynthesis; UDP-N-acetyl-alpha-D-glucosamine biosynthesis; N-acetyl-alpha-D-glucosamine 1-phosphate from alpha-D-glucosamine 6-phosphate (route II): step 2/2. It functions in the pathway nucleotide-sugar biosynthesis; UDP-N-acetyl-alpha-D-glucosamine biosynthesis; UDP-N-acetyl-alpha-D-glucosamine from N-acetyl-alpha-D-glucosamine 1-phosphate: step 1/1. It participates in bacterial outer membrane biogenesis; LPS lipid A biosynthesis. Catalyzes the last two sequential reactions in the de novo biosynthetic pathway for UDP-N-acetylglucosamine (UDP-GlcNAc). The C-terminal domain catalyzes the transfer of acetyl group from acetyl coenzyme A to glucosamine-1-phosphate (GlcN-1-P) to produce N-acetylglucosamine-1-phosphate (GlcNAc-1-P), which is converted into UDP-GlcNAc by the transfer of uridine 5-monophosphate (from uridine 5-triphosphate), a reaction catalyzed by the N-terminal domain. The polypeptide is Bifunctional protein GlmU (Geobacillus thermodenitrificans (strain NG80-2)).